The chain runs to 228 residues: Ras-related protein Rab-32D (228 aa).

16-23 (GDVNVGKT) lines the GTP pocket. The Effector region motif lies at 38–46 (YKSTIGADF). GTP-binding positions include 64–68 (DTAGQ) and 128–131 (NKSD). The segment at 183 to 228 (SDNEQFNDSPDEETSSITLLGTSKKHDNTNPNKPSTSSPSSCFNCK) is disordered. Positions 185-196 (NEQFNDSPDEET) are enriched in acidic residues. A compositionally biased stretch (low complexity) spans 211–228 (TNPNKPSTSSPSSCFNCK). Cys224 carries S-geranylgeranyl cysteine lipidation.

The protein belongs to the small GTPase superfamily. Rab family.

In Dictyostelium discoideum (Social amoeba), this protein is Ras-related protein Rab-32D (rab32D).